The primary structure comprises 134 residues: Protein E6 (134 aa).

2 zinc fingers span residues 15–51 (CLQC…CQIC) and 88–124 (CYYC…CYSC).

This sequence belongs to the papillomaviridae E6 protein family. In terms of assembly, forms homodimers. Interacts with ubiquitin-protein ligase UBE3A/E6-AP; this interaction stimulates UBE3A ubiquitin activity. Interacts with host BAK1.

The protein resides in the host cytoplasm. It localises to the host nucleus. In terms of biological role, plays a major role in the induction and maintenance of cellular transformation. E6 associates with host UBE3A/E6-AP ubiquitin-protein ligase and modulates its activity. Protects host keratinocytes from apoptosis by mediating the degradation of host BAK1. May also inhibit host immune response. The protein is Protein E6 of Bos taurus (Bovine).